The primary structure comprises 489 residues: Tripartite motif-containing protein 10 (489 aa).

An RING-type zinc finger spans residues Cys16–Lys61. The B box-type zinc finger occupies Glu94–Leu135. Zn(2+) is bound by residues Cys99, His102, Cys121, and His127. Positions Glu144 to Thr180 form a coiled coil. Residues Gln292–Val486 enclose the B30.2/SPRY domain.

It belongs to the TRIM/RBCC family. In terms of assembly, interacts with IFNAR1; this interaction prevents association of IFNAR1 with TYK2. In terms of tissue distribution, expressed in embryonic liver.

The protein localises to the cytoplasm. Functionally, E3 ligase that plays an essential role in the differentiation and survival of terminal erythroid cells. May directly bind to PTEN and promote its ubiquitination, resulting in its proteasomal degradation and activation of hypertrophic signaling. In addition, plays a role in immune response regulation by repressing the phosphorylation of STAT1 and STAT2 in the interferon/JAK/STAT signaling pathway independent of its E3 ligase activity. Mechanistically, interacts with the intracellular domain of IFNAR1 and thereby inhibits the association between TYK2 and IFNAR1. In Mus musculus (Mouse), this protein is Tripartite motif-containing protein 10 (Trim10).